A 351-amino-acid chain; its full sequence is Protein Wnt-8a (351 aa).

The signal sequence occupies residues 1-24; the sequence is MGNLFMLWAALGICCAAFSASAWS. A disulfide bridge connects residues C54 and C65. N-linked (GlcNAc...) asparagine glycosylation occurs at N103. Disulfide bonds link C104/C112, C114/C132, C180/C194, C182/C189, C259/C297, C275/C290, C294/C336, C312/C327, C314/C324, and C319/C320. The O-palmitoleoyl serine moiety is linked to residue S186. N-linked (GlcNAc...) asparagine glycans are attached at residues N262 and N281.

It belongs to the Wnt family. Forms a soluble 1:1 complex with AFM; this prevents oligomerization and is required for prolonged biological activity. The complex with AFM may represent the physiological form in body fluids. Post-translationally, palmitoleoylation is required for efficient binding to frizzled receptors. Depalmitoleoylation leads to Wnt signaling pathway inhibition. Proteolytic processing by TIKI1 and TIKI2 promotes oxidation and formation of large disulfide-bond oligomers, leading to inactivation of WNT8A.

The protein resides in the secreted. Its subcellular location is the extracellular space. The protein localises to the extracellular matrix. Its function is as follows. Ligand for members of the frizzled family of seven transmembrane receptors. Plays a role in embryonic patterning. The protein is Protein Wnt-8a (WNT8A) of Homo sapiens (Human).